Reading from the N-terminus, the 357-residue chain is UDP-N-acetylglucosamine--N-acetylmuramyl-(pentapeptide) pyrophosphoryl-undecaprenol N-acetylglucosamine transferase (357 aa).

UDP-N-acetyl-alpha-D-glucosamine is bound by residues 10–12 (TGG), asparagine 124, serine 189, isoleucine 244, and glutamine 289.

This sequence belongs to the glycosyltransferase 28 family. MurG subfamily.

Its subcellular location is the cell membrane. It catalyses the reaction Mur2Ac(oyl-L-Ala-gamma-D-Glu-L-Lys-D-Ala-D-Ala)-di-trans,octa-cis-undecaprenyl diphosphate + UDP-N-acetyl-alpha-D-glucosamine = beta-D-GlcNAc-(1-&gt;4)-Mur2Ac(oyl-L-Ala-gamma-D-Glu-L-Lys-D-Ala-D-Ala)-di-trans,octa-cis-undecaprenyl diphosphate + UDP + H(+). The protein operates within cell wall biogenesis; peptidoglycan biosynthesis. Cell wall formation. Catalyzes the transfer of a GlcNAc subunit on undecaprenyl-pyrophosphoryl-MurNAc-pentapeptide (lipid intermediate I) to form undecaprenyl-pyrophosphoryl-MurNAc-(pentapeptide)GlcNAc (lipid intermediate II). The sequence is that of UDP-N-acetylglucosamine--N-acetylmuramyl-(pentapeptide) pyrophosphoryl-undecaprenol N-acetylglucosamine transferase from Lactococcus lactis subsp. cremoris (strain MG1363).